A 186-amino-acid polypeptide reads, in one-letter code: MNREEALACVKQQLTEHRYIHTVGVMNTAIELAERFGADSKKAEIAAIFHDYAKFRPKEEMKQIIAREKMPAHLLDHNPELWHAPVGAYLVQREAGVQDEDILDAIRYHTSGRPGMTLLEKVIYVADYIEPNRAFPGVDEVRKLAETDLNQALIQSIKNTMVFLMKKNQPVFPDTFLTYNWLVSGS.

Residues 18-132 enclose the HD domain; the sequence is RYIHTVGVMN…IYVADYIEPN (115 aa). Histidine 21 is an ADP binding site. Fe cation-binding residues include histidine 21, histidine 50, and aspartate 51. ADP is bound by residues 51–54, histidine 83, 109–110, aspartate 127, arginine 133, and 170–175; these read DYAK, HT, and PVFPDT. Aspartate 127 contacts Fe cation.

Belongs to the Ap4A hydrolase YqeK family. Homodimer.

It catalyses the reaction P(1),P(4)-bis(5'-adenosyl) tetraphosphate + H2O = 2 ADP + 2 H(+). Its function is as follows. Hydrolyzes diadenosine 5',5'''-P1,P4-tetraphosphate (Ap4A) to yield ADP. In Bacillus subtilis (strain 168), this protein is Bis(5'-nucleosyl)-tetraphosphatase, symmetrical (yqeK).